The sequence spans 282 residues: Bis(5'-nucleosyl)-tetraphosphatase, symmetrical (282 aa).

It belongs to the Ap4A hydrolase family.

It catalyses the reaction P(1),P(4)-bis(5'-adenosyl) tetraphosphate + H2O = 2 ADP + 2 H(+). Its function is as follows. Hydrolyzes diadenosine 5',5'''-P1,P4-tetraphosphate to yield ADP. This chain is Bis(5'-nucleosyl)-tetraphosphatase, symmetrical, found in Salmonella paratyphi A (strain ATCC 9150 / SARB42).